The sequence spans 306 residues: uncharacterized protein (306 aa).

Helical transmembrane passes span 6–26 (LLGFTFALITAMAWGSLPIAL), 35–55 (AQTIVWYRFIIAAVSLLALLA), 69–89 (YAWIMLIGVIGLTSNFLLFSS), 98–118 (VAQIFIHLSSFGMLICGVLIF), 122–142 (LGLHQKIGLFLLLIGLGLFFN), 154–174 (YSTGVILGVGGALIWVAYGMA), 186–206 (QILLMMYLGCAIAFMPMADFS), 211–231 (LTPLALICFIYCCLNTLIGYG), 247–267 (VVITLVPLFTILFSHIAHYFS), and 281–301 (YIGAFVVVCGAILSAIGHKLL). EamA domains follow at residues 17–142 (MAWG…LFFN) and 166–296 (LIWV…LSAI).

It belongs to the EamA transporter family.

Its subcellular location is the cell membrane. This is an uncharacterized protein from Haemophilus influenzae (strain ATCC 51907 / DSM 11121 / KW20 / Rd).